The following is a 142-amino-acid chain: Transcriptional regulator MraZ (142 aa).

2 SpoVT-AbrB domains span residues 5 to 51 (ASSL…PRPV) and 77 to 120 (ASDV…DATK).

It belongs to the MraZ family. In terms of assembly, forms oligomers.

The protein localises to the cytoplasm. It is found in the nucleoid. The protein is Transcriptional regulator MraZ of Janthinobacterium sp. (strain Marseille) (Minibacterium massiliensis).